The chain runs to 149 residues: Arginine repressor (149 aa).

It belongs to the ArgR family.

It localises to the cytoplasm. The protein operates within amino-acid biosynthesis; L-arginine biosynthesis [regulation]. Its function is as follows. Regulates arginine biosynthesis genes. The polypeptide is Arginine repressor (Listeria innocua serovar 6a (strain ATCC BAA-680 / CLIP 11262)).